The primary structure comprises 81 residues: uncharacterized protein (81 aa).

This is an uncharacterized protein from Escherichia coli (strain K12).